The primary structure comprises 874 residues: Alanine--tRNA ligase (874 aa).

The Zn(2+) site is built by His-562, His-566, Cys-665, and His-669.

Belongs to the class-II aminoacyl-tRNA synthetase family. Zn(2+) is required as a cofactor.

The protein localises to the cytoplasm. The enzyme catalyses tRNA(Ala) + L-alanine + ATP = L-alanyl-tRNA(Ala) + AMP + diphosphate. Functionally, catalyzes the attachment of alanine to tRNA(Ala) in a two-step reaction: alanine is first activated by ATP to form Ala-AMP and then transferred to the acceptor end of tRNA(Ala). Also edits incorrectly charged Ser-tRNA(Ala) and Gly-tRNA(Ala) via its editing domain. This chain is Alanine--tRNA ligase, found in Pseudomonas putida (strain GB-1).